The chain runs to 82 residues: Small ribosomal subunit protein uS17 (82 aa).

The protein belongs to the universal ribosomal protein uS17 family. Part of the 30S ribosomal subunit.

Functionally, one of the primary rRNA binding proteins, it binds specifically to the 5'-end of 16S ribosomal RNA. This chain is Small ribosomal subunit protein uS17, found in Ehrlichia ruminantium (strain Gardel).